Here is an 84-residue protein sequence, read N- to C-terminus: Translational regulator CsrA (84 aa).

This sequence belongs to the CsrA/RsmA family. As to quaternary structure, homodimer; the beta-strands of each monomer intercalate to form a hydrophobic core, while the alpha-helices form wings that extend away from the core.

The protein localises to the cytoplasm. Its function is as follows. A translational regulator that binds mRNA to regulate translation initiation and/or mRNA stability. Usually binds in the 5'-UTR at or near the Shine-Dalgarno sequence preventing ribosome-binding, thus repressing translation. Its main target seems to be the major flagellin gene, while its function is anatagonized by FliW. The protein is Translational regulator CsrA of Leptospira borgpetersenii serovar Hardjo-bovis (strain JB197).